The chain runs to 135 residues: Transcriptional activator protein (135 aa).

Residues 17–32 carry the Nuclear localization signal motif; the sequence is KVTHRQVKKRAIRRRR. A zinc finger spans residues 37–54; it reads CGCSYYLHINCFNHGFTH. Residues 77–88 show a composition bias toward polar residues; it reads VFHNHQAPTTTI. The segment at 77–117 is disordered; it reads VFHNHQAPTTTIPAEPGHHNSPGSIQSQPEEGAGDSQMFSQ. The interval 120–135 is transactivation; sequence DLDNLTASDWSFLKGL.

The protein belongs to the geminiviridae transcriptional activator protein family. Monomer. Homodimer. Homooligomer. Self-interaction correlates with nuclear localization and efficient activation of transcription. Monomers suppress local silencing by interacting with and inactivating host adenosine kinase 2 (ADK2) in the cytoplasm. Interacts with and inhibits host SNF1 kinase. Binds to ssDNA. Post-translationally, phosphorylated.

It is found in the host nucleus. The protein resides in the host cytoplasm. Its function is as follows. Strong activator of the late viral genes promoters. Enhances the expression of the capsid protein and nuclear shuttle protein. Acts as a suppressor of RNA-mediated gene silencing, also known as post-transcriptional gene silencing (PTGS), a mechanism of plant viral defense that limits the accumulation of viral RNAs. Suppresses the host RNA silencing by inhibiting adenosine kinase 2 (ADK2), a kinase involved in a general methylation pathway. Also suppresses the host basal defense by interacting with and inhibiting SNF1 kinase, a key regulator of cell metabolism implicated in innate antiviral defense. Determines pathogenicity. This Hewittia sublobata (Coralbush) protein is Transcriptional activator protein.